The following is a 254-amino-acid chain: Small ribosomal subunit protein uS3 (254 aa).

The 69-residue stretch at 38–106 (IRKYVLARIP…DVQINIFEIK (69 aa)) folds into the KH type-2 domain. Low complexity predominate over residues 215-238 (NVGNAASGASSSSNNDNASPNQGG). The tract at residues 215 to 254 (NVGNAASGASSSSNNDNASPNQGGPRRKRGGEGNRKKSNK) is disordered. Positions 244-254 (GGEGNRKKSNK) are enriched in basic and acidic residues.

This sequence belongs to the universal ribosomal protein uS3 family. As to quaternary structure, part of the 30S ribosomal subunit. Forms a tight complex with proteins S10 and S14.

Functionally, binds the lower part of the 30S subunit head. Binds mRNA in the 70S ribosome, positioning it for translation. The polypeptide is Small ribosomal subunit protein uS3 (Cytophaga hutchinsonii (strain ATCC 33406 / DSM 1761 / CIP 103989 / NBRC 15051 / NCIMB 9469 / D465)).